The following is a 123-amino-acid chain: Large ribosomal subunit protein bL12 (123 aa).

Belongs to the bacterial ribosomal protein bL12 family. As to quaternary structure, homodimer. Part of the ribosomal stalk of the 50S ribosomal subunit. Forms a multimeric L10(L12)X complex, where L10 forms an elongated spine to which 2 to 4 L12 dimers bind in a sequential fashion. Binds GTP-bound translation factors.

In terms of biological role, forms part of the ribosomal stalk which helps the ribosome interact with GTP-bound translation factors. Is thus essential for accurate translation. The chain is Large ribosomal subunit protein bL12 from Pseudoalteromonas atlantica (strain T6c / ATCC BAA-1087).